We begin with the raw amino-acid sequence, 146 residues long: 3-hydroxyacyl-[acyl-carrier-protein] dehydratase FabZ (146 aa).

H49 is an active-site residue.

It belongs to the thioester dehydratase family. FabZ subfamily.

It is found in the cytoplasm. It catalyses the reaction a (3R)-hydroxyacyl-[ACP] = a (2E)-enoyl-[ACP] + H2O. In terms of biological role, involved in unsaturated fatty acids biosynthesis. Catalyzes the dehydration of short chain beta-hydroxyacyl-ACPs and long chain saturated and unsaturated beta-hydroxyacyl-ACPs. The protein is 3-hydroxyacyl-[acyl-carrier-protein] dehydratase FabZ of Pseudomonas aeruginosa (strain LESB58).